The sequence spans 369 residues: UDP-glucose 4-epimerase 4 (369 aa).

An NAD(+)-binding site is contributed by Thr-19–Leu-50. Ser-144 contributes to the substrate binding site. Tyr-168 serves as the catalytic Proton acceptor.

Belongs to the NAD(P)-dependent epimerase/dehydratase family. NAD(+) serves as cofactor.

The catalysed reaction is UDP-alpha-D-glucose = UDP-alpha-D-galactose. It participates in carbohydrate metabolism; galactose metabolism. Catalyzes the interconversion between UDP-glucose and UDP-galactose. The polypeptide is UDP-glucose 4-epimerase 4 (UGE-4) (Oryza sativa subsp. japonica (Rice)).